Consider the following 480-residue polypeptide: 2-phosphoxylose phosphatase 1 (480 aa).

Residues 1–6 (MLHRNR) lie on the Cytoplasmic side of the membrane. Residues 7–27 (FLVLLALAGLLAFLSLSLQFF) traverse the membrane as a helical; Signal-anchor for type II membrane protein segment. Residues 28–480 (HLIPVSATKN…YYDACHGEGA (453 aa)) are Lumenal-facing. His-97 acts as the Nucleophile in catalysis. 3 N-linked (GlcNAc...) asparagine glycosylation sites follow: Asn-194, Asn-305, and Asn-354. Asp-379 acts as the Proton donor in catalysis.

This sequence belongs to the histidine acid phosphatase family. In terms of assembly, interacts with B3GAT3; the interaction increases the 2-phosphoxylose phosphatase activity of PXYLP1 during completion of linkage region formation in a B3GAT3-mediated manner.

The protein resides in the golgi apparatus membrane. It carries out the reaction 3-O-[beta-D-GlcA-(1-&gt;3)-beta-D-Gal-(1-&gt;3)-beta-D-Gal-(1-&gt;4)-beta-D-2-O-P-Xyl]-L-seryl-[protein] + H2O = 3-O-(beta-D-GlcA-(1-&gt;3)-beta-D-Gal-(1-&gt;3)-beta-D-Gal-(1-&gt;4)-beta-D-Xyl)-L-seryl-[protein] + phosphate. Its function is as follows. Responsible for the 2-O-dephosphorylation of xylose in the glycosaminoglycan-protein linkage region of proteoglycans thereby regulating the amount of mature glycosaminoglycan (GAG) chains. Sulfated glycosaminoglycans (GAGs), including heparan sulfate and chondroitin sulfate, are synthesized on the so-called common GAG-protein linkage region (GlcUAbeta1-3Galbeta1-3Galbeta1-4Xylbeta1-O-Ser) of core proteins, which is formed by the stepwise addition of monosaccharide residues by the respective specific glycosyltransferases. Xylose 2-O-dephosphorylation during completion of linkage region formation is a prerequisite for the initiation and efficient elongation of the repeating disaccharide region of GAG chains. This is 2-phosphoxylose phosphatase 1 from Mus musculus (Mouse).